Here is a 675-residue protein sequence, read N- to C-terminus: Acetyl-coenzyme A synthetase 1 (675 aa).

Residues 1-10 show a composition bias toward polar residues; that stretch reads MPESTQQSHL. The interval 1 to 32 is disordered; it reads MPESTQQSHLSLDHEKMQQPPKGFTERSKTKP. CoA-binding positions include 212-215 and T331; that span reads RGGK. ATP contacts are provided by residues 407 to 409, 431 to 436, D522, and R537; these read GEP and DTYWQT. S545 provides a ligand contact to CoA. R548 contacts ATP. Position 609 (R609) interacts with CoA.

Belongs to the ATP-dependent AMP-binding enzyme family.

The enzyme catalyses acetate + ATP + CoA = acetyl-CoA + AMP + diphosphate. The polypeptide is Acetyl-coenzyme A synthetase 1 (ACS1) (Candida albicans (Yeast)).